The sequence spans 169 residues: MLARSALRSGFLPSLTSSVKTGFCLKAAAPTLSMKWSAVKYYSTKHFTKEHEWVKVDGDVGTVGITSYAANALGEVVFVELPEPETTVSVGDGIGAVESVKSASDVYSPVSGTVTSINESLGDSPDKVSSSPEEEGWICKIKLSSPDELKSLLNDESYAQFCKEEDASH.

Residues 60 to 142 (VGTVGITSYA…EEEGWICKIK (83 aa)) enclose the Lipoyl-binding domain. At Lys-101 the chain carries N6-lipoyllysine. Phosphoserine is present on Ser-131.

The protein belongs to the GcvH family. As to quaternary structure, component of the glycine decarboxylase complex (GDC), which is composed of four proteins: P, T, L and H. The cofactor is (R)-lipoate.

Its subcellular location is the mitochondrion. In terms of biological role, the glycine cleavage system (glycine decarboxylase complex) catalyzes the degradation of glycine. The H protein shuttles the methylamine group of glycine from the P protein to the T protein. This is Putative glycine cleavage system H protein, mitochondrial (gcv3) from Schizosaccharomyces pombe (strain 972 / ATCC 24843) (Fission yeast).